We begin with the raw amino-acid sequence, 371 residues long: UDP-N-acetylglucosamine--N-acetylmuramyl-(pentapeptide) pyrophosphoryl-undecaprenol N-acetylglucosamine transferase (371 aa).

UDP-N-acetyl-alpha-D-glucosamine is bound by residues 15–17, asparagine 126, arginine 172, serine 199, isoleucine 256, 275–280, and glutamine 301; these read TGG and ALTVSE.

The protein belongs to the glycosyltransferase 28 family. MurG subfamily.

It is found in the cell inner membrane. The enzyme catalyses di-trans,octa-cis-undecaprenyl diphospho-N-acetyl-alpha-D-muramoyl-L-alanyl-D-glutamyl-meso-2,6-diaminopimeloyl-D-alanyl-D-alanine + UDP-N-acetyl-alpha-D-glucosamine = di-trans,octa-cis-undecaprenyl diphospho-[N-acetyl-alpha-D-glucosaminyl-(1-&gt;4)]-N-acetyl-alpha-D-muramoyl-L-alanyl-D-glutamyl-meso-2,6-diaminopimeloyl-D-alanyl-D-alanine + UDP + H(+). The protein operates within cell wall biogenesis; peptidoglycan biosynthesis. Functionally, cell wall formation. Catalyzes the transfer of a GlcNAc subunit on undecaprenyl-pyrophosphoryl-MurNAc-pentapeptide (lipid intermediate I) to form undecaprenyl-pyrophosphoryl-MurNAc-(pentapeptide)GlcNAc (lipid intermediate II). This is UDP-N-acetylglucosamine--N-acetylmuramyl-(pentapeptide) pyrophosphoryl-undecaprenol N-acetylglucosamine transferase from Francisella philomiragia subsp. philomiragia (strain ATCC 25017 / CCUG 19701 / FSC 153 / O#319-036).